The primary structure comprises 569 residues: Urease subunit beta (569 aa).

A Urease domain is found at 131–569 (GGIDTHIHFI…VSLGQLYCLF (439 aa)). Residues His136, His138, and Lys219 each contribute to the Ni(2+) site. Lys219 is modified (N6-carboxylysine). His221 contacts substrate. Ni(2+) is bound by residues His248 and His274. His322 serves as the catalytic Proton donor. Asp362 lines the Ni(2+) pocket.

Belongs to the metallo-dependent hydrolases superfamily. Urease alpha subunit family. In terms of assembly, heterohexamer of 3 UreA (alpha) and 3 UreB (beta) subunits. The cofactor is Ni cation. In terms of processing, carboxylation allows a single lysine to coordinate two nickel ions.

It is found in the cytoplasm. The enzyme catalyses urea + 2 H2O + H(+) = hydrogencarbonate + 2 NH4(+). The protein operates within nitrogen metabolism; urea degradation; CO(2) and NH(3) from urea (urease route): step 1/1. The sequence is that of Urease subunit beta from Helicobacter hepaticus (strain ATCC 51449 / 3B1).